Consider the following 338-residue polypeptide: MKNSADITVLGAGSYGTALAISLASNGHKTLLWGHDPVHMQTLAQDKCNQAFLPGIAFPDCLQIEADLAKALAASNNVLVVVPSHVFGTVLEQAKPLLRSDARIVWATKGLEPETGRLLQDVARDVLGEQYPLAVLSGPTFAKELAMGLPTAISVAGTCPTFTNDLVELLHSPKRLRVYANDDFTGLQLGGAVKNVIAIGAGMSDGIGFGANARTALITRGLVELTRLGEALGANAATFMGMAGLGDLVLTCTDNQSRNRRFGLALGKGCDVMTAQAEIGQVVEGYRNTKEVFTLAKRLGVEMPITEQIYQVLYQGKSPVDAAKELLSREKKSETPAQ.

NADPH-binding residues include Ser14, Tyr15, His35, and Lys109. Residues Lys109, Gly138, and Thr140 each coordinate sn-glycerol 3-phosphate. NADPH is bound at residue Ala142. Sn-glycerol 3-phosphate contacts are provided by Lys194, Asp247, Ser257, Arg258, and Asn259. The active-site Proton acceptor is the Lys194. Arg258 contributes to the NADPH binding site. NADPH-binding residues include Val282 and Glu284.

The protein belongs to the NAD-dependent glycerol-3-phosphate dehydrogenase family.

It is found in the cytoplasm. It carries out the reaction sn-glycerol 3-phosphate + NAD(+) = dihydroxyacetone phosphate + NADH + H(+). The catalysed reaction is sn-glycerol 3-phosphate + NADP(+) = dihydroxyacetone phosphate + NADPH + H(+). It functions in the pathway membrane lipid metabolism; glycerophospholipid metabolism. Its function is as follows. Catalyzes the reduction of the glycolytic intermediate dihydroxyacetone phosphate (DHAP) to sn-glycerol 3-phosphate (G3P), the key precursor for phospholipid synthesis. In Shewanella baltica (strain OS185), this protein is Glycerol-3-phosphate dehydrogenase [NAD(P)+].